The chain runs to 1382 residues: MKAPAVLAPGILVLLFTLVQKSYGECREALVKSEMNVNMKYQLPNFTAETPIQNVVLHKHHIYLGAVNYIYVLNDKDLQKVAEYKTGPVLEHPDCFPCQDCSHKANLSGGVWKDNINMALLIDTYYDDQLISCGSVHRGTCQRHVLPPSNTADILSKVHCMYSPQADEESSHCPDCVVSALGTKVLISEKGRFINFFVGNTINSSYLTDHSLHSISVRRLKETQDGFKFLTDQSYIDVLPEFRDSYPIKYIHAFESNRFIYFLTVQRETLDAQTFHTRIIRFCSVDSGLHSYMEMPLECILTEKRRKRSTREEVFNILQAAYVSKPGAHLAKQIGANLNDDILYGVFAQSKPDSAEPMNRSAVCAFPIKYVNEFFNKIVNKNNVRCLQHFYGPNHEHCFNRTLLRNSSGCEVRSDEYRTEFTTALQRVDLFMGQFNQVLLTSISTFIKGDLTIANLGTSEGRFMQVVVSRSGSSTPHVNFRLDSHPVSSEAIVEHPLNQNGYTLVVTGKKITKIPLNGLGCEHFQSCSQCLSAPPFVQCGWCHDKCVQLEECPSGTWTQEICLPTIYEVFPTSAPLEGGTMLTVCGWDFGFRRNNKFDLKKTRVFLGNESCTLTLSESTTNMLKCTVGPAVNEHFNISIIISNGRGTAQYSTFSYVDPVITSIFPSYGPKTGGTLLTLTGKYLNSGNSRHISIGGKTCTLKSVSDSILECYTPAQTIPTEFPIKLKIDLANREMNSFSYQEDPIVYAIHPTKSFISGGSTITAVGKNLNSVSVLRMVISVHETRRNFTVACHHRSNSEIICCTTPSLQQLNLQLPLKTKAFFMLDGIHSKYFDLIYVHNPVFKPFEKPVMISIGNENVLEIKGNDIDPEAVKGEVLKVGNKSCETIYSDSEAVLCKVPNDLLKLNNELNIEWKQAVSSTILGKVIVQPDQNFTGLIVGVISISIILLLLLGVFLWLKKRKQIKDLGSELVRYDARVHTPHLDRLVSARSVSPTTEMVSNESVDYRATFPEDQFPNSSQNGSCRQVQYPLTDLSPMLNSGDSDISSPLLQNTVHIDLSALNPELVQAVQHVVIGPSSLIVHFNEVIGRGHFGCVYHGTLLDSDDKKIHCAVKSLNRITDIGEVSQFLTEGIIMKDFSHPNVLSLLGICLRSEGSPLVVLPYMKHGDLRNFIRNETHNPTVKDLIGFGLQVAKGMKYLASKKFVHRDLAARNCMLDEKFTVKVADFGLARDMYDKEYYSVHNKTGAKLPVKWMALESLQTQKFTTKSDVWSFGVLLWELMTRGAPPYPDVNTFDITVYLLQGRRLLQPEYCPDPLYEVMLKCWHPKAELRPSFSELVSRISAIFSTFIGEHYVHVNATYVNVKCVAPYPSLLSSQDNIDGEGDT.

Residues 1–24 (MKAPAVLAPGILVLLFTLVQKSYG) form the signal peptide. The Extracellular segment spans residues 25–933 (ECREALVKSE…VIVQPDQNFT (909 aa)). The Sema domain maps to 27-516 (REALVKSEMN…TGKKITKIPL (490 aa)). Asn-45 carries N-linked (GlcNAc...) asparagine glycosylation. 4 disulfides stabilise this stretch: Cys-95-Cys-101, Cys-98-Cys-160, Cys-133-Cys-141, and Cys-173-Cys-176. The N-linked (GlcNAc...) asparagine glycan is linked to Asn-106. Asn-203 and Asn-359 each carry an N-linked (GlcNAc...) asparagine glycan. Disulfide bonds link Cys-299–Cys-364 and Cys-386–Cys-398. Asn-400 and Asn-406 each carry an N-linked (GlcNAc...) asparagine glycan. 4 disulfides stabilise this stretch: Cys-521–Cys-539, Cys-527–Cys-562, Cys-530–Cys-546, and Cys-542–Cys-552. 3 IPT/TIG domains span residues 564 to 656 (PTIY…FSYV), 658 to 740 (PVIT…FSYQ), and 743 to 837 (PIVY…LIYV). O-linked (Man) threonine glycosylation is present at Thr-583. Residues Asn-608 and Asn-636 are each glycosylated (N-linked (GlcNAc...) asparagine). Residues Thr-677 and Thr-762 are each glycosylated (O-linked (Man) threonine). Residues Asn-786, Asn-880, and Asn-931 are each glycosylated (N-linked (GlcNAc...) asparagine). A helical transmembrane segment spans residues 934 to 956 (GLIVGVISISIILLLLLGVFLWL). At 957 to 1382 (KKRKQIKDLG…QDNIDGEGDT (426 aa)) the chain is on the cytoplasmic side. Ser-967 carries the phosphoserine modification. At Thr-978 the chain carries Phosphothreonine. Phosphoserine occurs at positions 991, 998, and 1001. Position 1004 is a phosphotyrosine (Tyr-1004). The Protein kinase domain occupies 1079–1346 (VHFNEVIGRG…RISAIFSTFI (268 aa)). Residues 1085 to 1093 (IGRGHFGCV) and Lys-1111 contribute to the ATP site. The Proton acceptor role is filled by Asp-1205. An interaction with RANBP9 region spans residues 1213-1382 (LDEKFTVKVA…QDNIDGEGDT (170 aa)). The residue at position 1231 (Tyr-1231) is a Phosphotyrosine. A phosphotyrosine; by autocatalysis mark is found at Tyr-1235 and Tyr-1236. Phosphothreonine is present on Thr-1290. Residues 1321-1360 (WHPKAELRPSFSELVSRISAIFSTFIGEHYVHVNATYVNV) are interaction with MUC20. Tyr-1350 and Tyr-1357 each carry phosphotyrosine; by autocatalysis. Position 1366 is a phosphotyrosine (Tyr-1366).

The protein belongs to the protein kinase superfamily. Tyr protein kinase family. Heterodimer made of an alpha chain (50 kDa) and a beta chain (145 kDa) which are disulfide linked. Binds PLXNB1. Interacts when phosphorylated with downstream effectors including STAT3, PIK3R1, SRC, PCLG1, GRB2 and GAB1. Interacts with SPSB1, SPSB2 and SPSB4. Interacts with INPP5D/SHIP1. When phosphorylated at Tyr-1357, interacts with INPPL1/SHIP2. Interacts with RANBP9 and RANBP10, as well as SPSB1, SPSB2, SPSB3 and SPSB4. SPSB1 binding occurs in the presence and in the absence of HGF, however HGF treatment has a positive effect on this interaction. Interacts with MUC20; prevents interaction with GRB2 and suppresses hepatocyte growth factor-induced cell proliferation. Interacts with GRB10. Interacts with PTPN1 and PTPN2. Interacts with HSP90AA1 and HSP90AB1; the interaction suppresses MET kinase activity. Interacts with tensin TNS3. Interacts (when phosphorylated) with tensin TNS4 (via SH2 domain); the interaction increases MET protein stability by inhibiting MET endocytosis and subsequent lysosomal degradation. Autophosphorylated in response to ligand binding on Tyr-1235 and Tyr-1236 in the kinase domain leading to further phosphorylation of Tyr-1350 and Tyr-1357 in the C-terminal multifunctional docking site. Dephosphorylated by PTPRJ at Tyr-1350 and Tyr-1366. Dephosphorylated by PTPN1 and PTPN2. Post-translationally, ubiquitinated. Ubiquitination by CBL regulates the receptor stability and activity through proteasomal degradation. In terms of processing, O-mannosylation of IPT/TIG domains by TMEM260 is required for protein maturation. O-mannosylated residues are composed of single mannose glycans that are not elongated or modified.

Its subcellular location is the membrane. The enzyme catalyses L-tyrosyl-[protein] + ATP = O-phospho-L-tyrosyl-[protein] + ADP + H(+). In its inactive state, the C-terminal tail interacts with the catalytic domain and inhibits the kinase activity. Upon ligand binding, the C-terminal tail is displaced and becomes phosphorylated, thus increasing the kinase activity. Its function is as follows. Receptor tyrosine kinase that transduces signals from the extracellular matrix into the cytoplasm by binding to hepatocyte growth factor/HGF ligand. Regulates many physiological processes including proliferation, scattering, morphogenesis and survival. Ligand binding at the cell surface induces autophosphorylation of MET on its intracellular domain that provides docking sites for downstream signaling molecules. Following activation by ligand, interacts with the PI3-kinase subunit PIK3R1, PLCG1, SRC, GRB2, STAT3 or the adapter GAB1. Recruitment of these downstream effectors by MET leads to the activation of several signaling cascades including the RAS-ERK, PI3 kinase-AKT, or PLCgamma-PKC. The RAS-ERK activation is associated with the morphogenetic effects while PI3K/AKT coordinates prosurvival effects. During embryonic development, MET signaling plays a role in gastrulation, development and migration of muscles and neuronal precursors, angiogenesis and kidney formation. In adults, participates in wound healing as well as organ regeneration and tissue remodeling. Also promotes differentiation and proliferation of hematopoietic cells. This Felis catus (Cat) protein is Hepatocyte growth factor receptor (MET).